The sequence spans 56 residues: uncharacterized protein (56 aa).

This is an uncharacterized protein from Thermoproteus tenax virus 1 (strain KRA1) (TTV1).